We begin with the raw amino-acid sequence, 524 residues long: Phenylalanine--tRNA ligase alpha subunit (524 aa).

L-phenylalanine contacts are provided by Thr-362, Tyr-441, and Phe-467.

It belongs to the class-II aminoacyl-tRNA synthetase family. Phe-tRNA synthetase alpha subunit type 2 subfamily. As to quaternary structure, tetramer of two alpha and two beta subunits. Requires Mg(2+) as cofactor.

The protein resides in the cytoplasm. The enzyme catalyses tRNA(Phe) + L-phenylalanine + ATP = L-phenylalanyl-tRNA(Phe) + AMP + diphosphate + H(+). The sequence is that of Phenylalanine--tRNA ligase alpha subunit from Methanopyrus kandleri (strain AV19 / DSM 6324 / JCM 9639 / NBRC 100938).